A 360-amino-acid chain; its full sequence is E3 ubiquitin-protein ligase HAKAI homolog (360 aa).

A compositionally biased stretch (basic and acidic residues) spans 1–11; the sequence is MLQIRLRRDSP. Residues 1–24 are disordered; sequence MLQIRLRRDSPTETGNGARPSPTE. The RING-type zinc-finger motif lies at 72–107; that stretch reads CVRCDFPIAIYGRLIPCDHAFCLECARSDSICYLCD. The C2H2-type zinc finger occupies 123-148; that stretch reads FICAAPHCLRSFLKKLDFEAHVHDLH. The tract at residues 156-360 is disordered; the sequence is AEKEDGNQSD…QENRDGFGQE (205 aa). 3 stretches are compositionally biased toward polar residues: residues 163–179, 186–214, and 270–283; these read QSDV…SEST, SQLQ…QNYP, and YPTT…QFFN. Residues 293 to 304 are compositionally biased toward low complexity; it reads ESGGSEQSSLLG.

The protein belongs to the Hakai family. As to quaternary structure, interacts with MTB and VIR. Associates with MTA, MTB, FIP37 and VIR to form the m6A writer complex which is essential for adenosine methylation at specific mRNA sequences.

It is found in the nucleus speckle. Its subcellular location is the nucleus. It localises to the nucleoplasm. The catalysed reaction is S-ubiquitinyl-[E2 ubiquitin-conjugating enzyme]-L-cysteine + [acceptor protein]-L-lysine = [E2 ubiquitin-conjugating enzyme]-L-cysteine + N(6)-ubiquitinyl-[acceptor protein]-L-lysine.. In terms of biological role, probable E3 ubiquitin-protein ligase which is a subunit of the N6-methyltransferase complex, a multiprotein complex that mediates N6-methyladenosine (m6A) methylation at the 5'-[AG]GAC-3' consensus sites of some mRNAs. Associates with MTA, MTB, FIP37 and VIR to form the m6A writer complex which is essential for adenosine methylation at specific mRNA sequences. N6-methyladenosine (m6A) plays a role in mRNA stability, processing, translation efficiency and editing. This is E3 ubiquitin-protein ligase HAKAI homolog from Arabidopsis thaliana (Mouse-ear cress).